A 380-amino-acid polypeptide reads, in one-letter code: Glucose-1-phosphate adenylyltransferase (380 aa).

Alpha-D-glucose 1-phosphate-binding positions include Gly-164, 179–180 (EK), and Ser-190.

This sequence belongs to the bacterial/plant glucose-1-phosphate adenylyltransferase family. As to quaternary structure, homotetramer.

The catalysed reaction is alpha-D-glucose 1-phosphate + ATP + H(+) = ADP-alpha-D-glucose + diphosphate. It participates in glycan biosynthesis; glycogen biosynthesis. Functionally, involved in the biosynthesis of ADP-glucose, a building block required for the elongation reactions to produce glycogen. Catalyzes the reaction between ATP and alpha-D-glucose 1-phosphate (G1P) to produce pyrophosphate and ADP-Glc. In Lactococcus lactis subsp. cremoris (strain SK11), this protein is Glucose-1-phosphate adenylyltransferase.